The chain runs to 474 residues: Proline--tRNA ligase (474 aa).

This sequence belongs to the class-II aminoacyl-tRNA synthetase family. ProS type 3 subfamily. In terms of assembly, homodimer.

The protein resides in the cytoplasm. The catalysed reaction is tRNA(Pro) + L-proline + ATP = L-prolyl-tRNA(Pro) + AMP + diphosphate. Its function is as follows. Catalyzes the attachment of proline to tRNA(Pro) in a two-step reaction: proline is first activated by ATP to form Pro-AMP and then transferred to the acceptor end of tRNA(Pro). The chain is Proline--tRNA ligase from Phytoplasma australiense.